A 284-amino-acid polypeptide reads, in one-letter code: 2-dehydro-3-deoxyphosphooctonate aldolase (284 aa).

The protein belongs to the KdsA family.

It is found in the cytoplasm. The enzyme catalyses D-arabinose 5-phosphate + phosphoenolpyruvate + H2O = 3-deoxy-alpha-D-manno-2-octulosonate-8-phosphate + phosphate. The protein operates within carbohydrate biosynthesis; 3-deoxy-D-manno-octulosonate biosynthesis; 3-deoxy-D-manno-octulosonate from D-ribulose 5-phosphate: step 2/3. It participates in bacterial outer membrane biogenesis; lipopolysaccharide biosynthesis. The chain is 2-dehydro-3-deoxyphosphooctonate aldolase from Proteus mirabilis (strain HI4320).